The chain runs to 309 residues: Probable pathogenesis-related protein ARB_02861 (309 aa).

Residues 1–17 (MKSSVLMTALCVAGSLA) form the signal peptide. Over residues 47–59 (CPTVIPTTSYKPE) the composition is skewed to low complexity. Positions 47–152 (CPTVIPTTSY…PPPPGKDYKE (106 aa)) are disordered. Composition is skewed to pro residues over residues 61 to 92 (TSKP…PCPE) and 99 to 147 (APPP…PPPG). An SCP domain is found at 154–284 (AGYHHNVHRS…GDAYYTVCNY (131 aa)). An N-linked (GlcNAc...) asparagine glycan is attached at N164.

The protein belongs to the CRISP family.

It localises to the secreted. Secreted protein required for efficient export of lipids such as acetylated sterols. Acts in detoxification of hydrophobic compounds. This chain is Probable pathogenesis-related protein ARB_02861, found in Arthroderma benhamiae (strain ATCC MYA-4681 / CBS 112371) (Trichophyton mentagrophytes).